The sequence spans 907 residues: MFGKILTKLFGSRNDRTLKSLGKTVTKINALEDEYEKLTDEELKAKTTAFRGRLESGETLDDVMSEAFAVVREASKRVFEMRHFDVQMLGGMVLDSNRIAEMRTGEGKTLTATLPAYLNGLTGKGVHVITVNDYLARRDAENNRPLFEFLGLSVGINVAGLGQQEKKAAYDADITYGTNNEFGFDYLRDNMAFSPQERVQRPLHYALIDEVDSILIDEARTPLIISGAAEDSSELYTKINTLIPHLVRQDKEDTEEEIGDGDYSIDEKAKQVHMTERGQEKVEVLLTERGMLAEGDSLYSAANISLLHHVNAALRAHTLFEKDVDYIVQDNEVIIVDEHTGRTMPGRRWSEGLHQAVEAKEGVHIQNENQTLASITFQNFFRQYEKLAGMTGTADTEAFEFQHIYGLDTVVIPTNRPMVRKDHADLVYLTPDEKYAAIIEDIRGCRERGQPVLVGTVSIEQSELLARLMKQEKIPHEVLNAKFHEREADIVAQAGRTGAVTIATNMAGRGTDIVLGGNWAMEIEVLTNPTDEQKAKIKTDWQVRHDEVVAAGGLHILGTERHESRRIDNQLRGRSGRQGDAGSSRFYLSMEDSLMRIFASDRVSSMMKKLGMEKGEAIEHPWVSRAIENAQRKVEARNFDIRKQLLEFDDVANDQRQVVYAQRNELMDAESIQDTIVNIQADVVNGLVDQYIPQQSVEELWDVPGLQTRLEQEYGLKMPVQEWLDKEDDLHEETLRERIVDTWVKSYQAKEEMVGEQVLRQFEKAVMLQTLDGLWKEHLAAMDHLRQGIHLRGYAQKNPKQEYKRESFELFQQMLETLKHDVISVLSKVQVQAQSDVEEMEERRRQEDAKIQRDYQHASAEAIVGAEEAESLSAHTPVVREGEKVGRNDPCPCGSGRKYKQCHGKLT.

Residues Gln87, 105-109 (GEGKT), and Asp512 each bind ATP. A disordered region spans residues 869–897 (AESLSAHTPVVREGEKVGRNDPCPCGSGR). Residues 878–887 (VVREGEKVGR) are compositionally biased toward basic and acidic residues. Positions 891, 893, 902, and 903 each coordinate Zn(2+).

It belongs to the SecA family. In terms of assembly, monomer and homodimer. Part of the essential Sec protein translocation apparatus which comprises SecA, SecYEG and auxiliary proteins SecDF-YajC and YidC. Zn(2+) serves as cofactor.

The protein resides in the cell inner membrane. Its subcellular location is the cytoplasm. The catalysed reaction is ATP + H2O + cellular proteinSide 1 = ADP + phosphate + cellular proteinSide 2.. Functionally, part of the Sec protein translocase complex. Interacts with the SecYEG preprotein conducting channel. Has a central role in coupling the hydrolysis of ATP to the transfer of proteins into and across the cell membrane, serving both as a receptor for the preprotein-SecB complex and as an ATP-driven molecular motor driving the stepwise translocation of polypeptide chains across the membrane. In Shewanella sediminis (strain HAW-EB3), this protein is Protein translocase subunit SecA.